The chain runs to 932 residues: MAAPQSRPRRGELILLCALLGTLWEIGRGQIRYSVPEETDKGSFVGNISKDLGLDPRELAKHGVRIVSRGRTQLFALNPRSGSLVTAGRIDREELCAQSPRCLININILVEDKGKLFGIEIEIVDINDNNPKFQVEDLEVKINEIAVPGARYPLPEAVDPDVGVNSLQSYQLSPNHHFSLDVQTGDNGAINPELVLERALDREEEAAHHLVLTASDGGEPRRSSTVRIHVTVLDTNDNAPVFPHPIYRVKVLENMPPGTRLLTVTASDPDEGINGKVAYKFRKINEKQTPLFQLNENTGEISIAKSLDYEECSFYEMEIQAEDVGALLGRTKLLISVEDVNDNRPEVIITSLFSPVLENSLPGTVIAFLSVHDQDSGKNGQVVCHTRDNLPFKLEKSIDNYYRLVTRKYLDRENVSIYNITVMASDLGTPPLSTETQIALHVADINDNPPTFPHASYSAYILENNLRGASIFSLTAHDPDSQENAQVTYSVTEDTLQGAPLSSYISINSDTGVLYALQSFDYEQIRDLQLLVTASDSGDPPLSSNVSLSLFVLDQNDNAPEILYPTLPTDGSTGLELAPRSAEPGYLVTKVVAVDRDSGQNAWLSYRLLKASEPGLFSVGLHTGEVRTARALLDRDALKQSLVVAVQDHGQPPLSATVTLTVAVADSIPEVLTELGSLKPSVDPNDSSLTLYLVVAVAAISCVFLAFVAVLLGLRLRRWHKSHLLQDSSGRLVGVPASHFVGVEEVQAFLQTYSQEVSLTADSRKSHLIFPQPNYADTLISQESCEKNDSLLTSVDFHEYKNEADHGQQAPPNTDWRFSQAQRPGTSGSQNGDDTGTWPNNQFDTEMLQAMILASASEAADGSSTLGGGAGTMGLSARYGPQFTLQHVPDYRQNVYIPGSNATLTNAAGKRDGKAPAGGNGNKKKSGKKEKK.

Positions 1–29 (MAAPQSRPRRGELILLCALLGTLWEIGRG) are cleaved as a signal peptide. 6 Cadherin domains span residues 30–133 (QIRY…NPKF), 134–242 (QVED…APVF), 243–347 (PHPI…RPEV), 348–452 (IITS…PPTF), 453–562 (PHAS…APEI), and 570–682 (DGST…KPSV). Residues 30–692 (QIRYSVPEET…DPNDSSLTLY (663 aa)) lie on the Extracellular side of the membrane. An N-linked (GlcNAc...) asparagine glycan is attached at Asn-47. N-linked (GlcNAc...) asparagine glycosylation is found at Asn-414, Asn-419, and Asn-545. Asn-685 carries N-linked (GlcNAc...) asparagine glycosylation. Residues 693 to 713 (LVVAVAAISCVFLAFVAVLLG) traverse the membrane as a helical segment. Residues 714–932 (LRLRRWHKSH…KKKSGKKEKK (219 aa)) lie on the Cytoplasmic side of the membrane. 2 disordered regions span residues 804–841 (ADHG…WPNN) and 902–932 (ATLT…KEKK). The segment covering 810–841 (APPNTDWRFSQAQRPGTSGSQNGDDTGTWPNN) has biased composition (polar residues). The segment covering 922–932 (NKKKSGKKEKK) has biased composition (basic residues).

Its subcellular location is the cell membrane. In terms of biological role, potential calcium-dependent cell-adhesion protein. May be involved in the establishment and maintenance of specific neuronal connections in the brain. This Pan troglodytes (Chimpanzee) protein is Protocadherin gamma-A8 (PCDHGA8).